Reading from the N-terminus, the 426-residue chain is Phosphomethylpyrimidine synthase (426 aa).

Substrate-binding positions include N65, M94, Y123, H162, 184 to 186 (SRG), 225 to 228 (DGMR), and E264. Residue H268 participates in Zn(2+) binding. Y291 serves as a coordination point for substrate. H332 provides a ligand contact to Zn(2+). [4Fe-4S] cluster contacts are provided by C408, C411, and C415.

Belongs to the ThiC family. Requires [4Fe-4S] cluster as cofactor.

The catalysed reaction is 5-amino-1-(5-phospho-beta-D-ribosyl)imidazole + S-adenosyl-L-methionine = 4-amino-2-methyl-5-(phosphooxymethyl)pyrimidine + CO + 5'-deoxyadenosine + formate + L-methionine + 3 H(+). It functions in the pathway cofactor biosynthesis; thiamine diphosphate biosynthesis. Functionally, catalyzes the synthesis of the hydroxymethylpyrimidine phosphate (HMP-P) moiety of thiamine from aminoimidazole ribotide (AIR) in a radical S-adenosyl-L-methionine (SAM)-dependent reaction. In Methanococcus vannielii (strain ATCC 35089 / DSM 1224 / JCM 13029 / OCM 148 / SB), this protein is Phosphomethylpyrimidine synthase.